The sequence spans 452 residues: Prephenate dehydrogenase [NADP(+)] (452 aa).

14–43 (KVIGIIGLGDMGLLYANKFTDAGWGVICCD) serves as a coordination point for NADP(+). The 284-residue stretch at 14 to 297 (KVIGIIGLGD…GKHTGLLLLD (284 aa)) folds into the Prephenate/arogenate dehydrogenase domain.

This sequence belongs to the prephenate/arogenate dehydrogenase family.

The catalysed reaction is prephenate + NADP(+) = 3-(4-hydroxyphenyl)pyruvate + CO2 + NADPH. The protein operates within amino-acid biosynthesis; L-tyrosine biosynthesis; (4-hydroxyphenyl)pyruvate from prephenate (NADP(+) route): step 1/1. The chain is Prephenate dehydrogenase [NADP(+)] (TYR1) from Saccharomyces cerevisiae (strain ATCC 204508 / S288c) (Baker's yeast).